The sequence spans 94 residues: Cell division protein FtsB (94 aa).

Over 1-3 (MRW) the chain is Cytoplasmic. The helical transmembrane segment at 4–21 (LTVGLLAAIGLLQYPLWV) threads the bilayer. The Periplasmic portion of the chain corresponds to 22–94 (GKGGWLKVWE…VQIPEKVPGK (73 aa)). Residues 31 to 73 (EYDRQLQQQKEVTRKLEIRNAGLDAEVRDLKQGYDAIEERARF) are a coiled coil.

Belongs to the FtsB family. Part of a complex composed of FtsB, FtsL and FtsQ.

The protein localises to the cell inner membrane. Functionally, essential cell division protein. May link together the upstream cell division proteins, which are predominantly cytoplasmic, with the downstream cell division proteins, which are predominantly periplasmic. This chain is Cell division protein FtsB, found in Dechloromonas aromatica (strain RCB).